The following is a 499-amino-acid chain: UDP-N-acetylmuramoylalanine--D-glutamate ligase (499 aa).

128 to 134 lines the ATP pocket; sequence GTNGKTT.

Belongs to the MurCDEF family.

It localises to the cytoplasm. The catalysed reaction is UDP-N-acetyl-alpha-D-muramoyl-L-alanine + D-glutamate + ATP = UDP-N-acetyl-alpha-D-muramoyl-L-alanyl-D-glutamate + ADP + phosphate + H(+). Its pathway is cell wall biogenesis; peptidoglycan biosynthesis. In terms of biological role, cell wall formation. Catalyzes the addition of glutamate to the nucleotide precursor UDP-N-acetylmuramoyl-L-alanine (UMA). The polypeptide is UDP-N-acetylmuramoylalanine--D-glutamate ligase (Rhodococcus jostii (strain RHA1)).